A 188-amino-acid chain; its full sequence is Elongation factor P (188 aa).

The protein belongs to the elongation factor P family.

Its subcellular location is the cytoplasm. The protein operates within protein biosynthesis; polypeptide chain elongation. Its function is as follows. Involved in peptide bond synthesis. Stimulates efficient translation and peptide-bond synthesis on native or reconstituted 70S ribosomes in vitro. Probably functions indirectly by altering the affinity of the ribosome for aminoacyl-tRNA, thus increasing their reactivity as acceptors for peptidyl transferase. In Gluconobacter oxydans (strain 621H) (Gluconobacter suboxydans), this protein is Elongation factor P.